A 395-amino-acid chain; its full sequence is Forkhead box protein I3 (395 aa).

Residues 131–225 (RPPYSYSALI…DNGNFRRKRK (95 aa)) constitute a DNA-binding region (fork-head). Disordered regions lie at residues 216-288 (DNGN…GIIS) and 322-370 (RNFS…SSGS). Positions 221–227 (RRKRKRR) match the Nuclear localization signal motif. The segment covering 234–245 (ATTAAASSLGGL) has biased composition (low complexity). Over residues 325–335 (SAGQLSGGTFT) the composition is skewed to polar residues. Over residues 336-349 (PSSSSSQEVPSPEQ) the composition is skewed to low complexity.

As to expression, initially expressed in the pre-placodal ectoderm surrounding the neural plate, which will give rise to all craniofacial sensory organs. Expression then becomes restricted to a region immediately anterior to the first pair of somites that will give rise to the otic and epibranchial placodes, before becoming down-regulated from this region and restricted to the ectoderm and endoderm of the pharyngeal arches.

It localises to the nucleus. Transcription factor required for pharyngeal arch development, which is involved in otic placode development. The chain is Forkhead box protein I3 from Gallus gallus (Chicken).